We begin with the raw amino-acid sequence, 447 residues long: Methylenetetrahydrofolate--tRNA-(uracil-5-)-methyltransferase TrmFO (447 aa).

Residue 10–15 (GAGLAG) coordinates FAD.

This sequence belongs to the MnmG family. TrmFO subfamily. FAD is required as a cofactor.

Its subcellular location is the cytoplasm. It carries out the reaction uridine(54) in tRNA + (6R)-5,10-methylene-5,6,7,8-tetrahydrofolate + NADH + H(+) = 5-methyluridine(54) in tRNA + (6S)-5,6,7,8-tetrahydrofolate + NAD(+). It catalyses the reaction uridine(54) in tRNA + (6R)-5,10-methylene-5,6,7,8-tetrahydrofolate + NADPH + H(+) = 5-methyluridine(54) in tRNA + (6S)-5,6,7,8-tetrahydrofolate + NADP(+). In terms of biological role, catalyzes the folate-dependent formation of 5-methyl-uridine at position 54 (M-5-U54) in all tRNAs. The polypeptide is Methylenetetrahydrofolate--tRNA-(uracil-5-)-methyltransferase TrmFO (Lactococcus lactis subsp. lactis (strain IL1403) (Streptococcus lactis)).